A 1142-amino-acid polypeptide reads, in one-letter code: Potassium channel subfamily T member 2 (1142 aa).

Residues M1–R63 lie on the Cytoplasmic side of the membrane. The chain crosses the membrane as a helical span at residues L64–E84. The Extracellular segment spans residues K85–S101. Residue N99 is glycosylated (N-linked (GlcNAc...) asparagine). A helical membrane pass occupies residues L102–L122. At G123–R137 the chain is on the cytoplasmic side. The helical transmembrane segment at V138–T158 threads the bilayer. Residues L159 to R160 lie on the Extracellular side of the membrane. Residues N161–A173 form a helical membrane-spanning segment. Over K174–Q198 the chain is Cytoplasmic. The helical transmembrane segment at V199–H219 threads the bilayer. Topologically, residues L220–N228 are extracellular. The segment at residues L229–T249 is an intramembrane region (pore-forming). Topologically, residues P250–K256 are extracellular. The helical transmembrane segment at L257 to L277 threads the bilayer. Topologically, residues A278 to L1142 are cytoplasmic. RCK N-terminal domains lie at E299 to V435 and N725 to L865. Disordered stretches follow at residues D989–T1044 and P1118–L1142. The span at L1017–G1037 shows a compositional bias: basic residues. Over residues P1118 to C1129 the composition is skewed to polar residues.

It belongs to the potassium channel family. Calcium-activated (TC 1.A.1.3) subfamily. KCa4.2/KCNT2 sub-subfamily. As to quaternary structure, homotetramer. Forms heteromer with KCNT1; heteromeric channels differ from those of homomeric channels in their unitary conductance, kinetic behavior, subcellular localization, and response to activation of protein kinase C. Phosphorylated by protein kinase C. Phosphorylation of the C-terminal domain inhibits channel activity. In terms of tissue distribution, detected in brain, and at low levels in heart. Detected in brainstem, including auditory neurons such as the medial nucleus of the trapezoid body. Detected in the olfactory bulb, red nucleus, facial nucleus, pontine nucleus, oculomotor nucleus, substantia nigra, deep cerebellar nuclei, vestibular nucleus, and the thalamus. Detected in hippocampal CA1, CA2, and CA3 regions, the dentate gyrus, supraoptic nucleus, hypothalamus, dorsal root ganglion, and cortical layers II, III, and V. Detected in striatum cholinergic interneurons.

Its subcellular location is the cell membrane. It carries out the reaction K(+)(in) = K(+)(out). With respect to regulation, are normally in a closed state unless activated by an increase in intracellular Na(+) and Cl(-). Inhibited upon stimulation of G-protein coupled receptors, such as CHRM1 and GRM1. There is conflicting data about the effect of ATP on KNCT2 channels activity. Intracellular ATP was initially report to inhibit the channel activity. However, others studies conclude that KNCT2 channels are not inhibited by intracellular ATP. Functionally, sodium-activated and chloride-activated potassium channel. Produces rapidly activating outward rectifier K(+) currents. Contributes to regulate neuronal excitability. The sequence is that of Potassium channel subfamily T member 2 (Kcnt2) from Rattus norvegicus (Rat).